The primary structure comprises 883 residues: Phosphoenolpyruvate carboxylase (883 aa).

Catalysis depends on residues His-138 and Lys-546.

It belongs to the PEPCase type 1 family. As to quaternary structure, homotetramer. Mg(2+) serves as cofactor.

The enzyme catalyses oxaloacetate + phosphate = phosphoenolpyruvate + hydrogencarbonate. Its activity is regulated as follows. The enzyme has distinct binding sites for each of the allosteric effectors such as acetyl-CoA, fructose 1,6-bisphosphate, guanosine 3'-diphosphate 5'-diphosphate, long chain fatty acids, and L-aspartate. Forms oxaloacetate, a four-carbon dicarboxylic acid source for the tricarboxylic acid cycle. This is Phosphoenolpyruvate carboxylase (ppc) from Salmonella typhi.